A 101-amino-acid chain; its full sequence is A-type ATP synthase subunit F (101 aa).

This sequence belongs to the V-ATPase F subunit family. As to quaternary structure, has multiple subunits with at least A(3), B(3), C, D, E, F, H, I and proteolipid K(x).

Its subcellular location is the cell membrane. Functionally, component of the A-type ATP synthase that produces ATP from ADP in the presence of a proton gradient across the membrane. The sequence is that of A-type ATP synthase subunit F from Archaeoglobus fulgidus (strain ATCC 49558 / DSM 4304 / JCM 9628 / NBRC 100126 / VC-16).